Consider the following 21-residue polypeptide: Bombinin-H1/H3 (21 aa).

Ile-2 carries the post-translational modification D-allo-isoleucine; in form H3. Position 20 is an isoleucine amide (Ile-20).

Belongs to the bombinin family. As to expression, expressed by the skin glands.

Its subcellular location is the secreted. In terms of biological role, has antimicrobial and hemolytic activities. The chain is Bombinin-H1/H3 from Bombina variegata (Yellow-bellied toad).